The primary structure comprises 554 residues: GPI transamidase component PIG-S homolog (554 aa).

The Cytoplasmic portion of the chain corresponds to 1 to 73; the sequence is MSPCKWLTMF…LNKPEKSLKR (73 aa). The helical transmembrane segment at 74–94 threads the bilayer; that stretch reads YALLSFYVIILLAIPVWWKTT. The Lumenal segment spans residues 95–511; it reads HYERSSLPFE…VTTIYFPDES (417 aa). Residues asparagine 132 and asparagine 375 are each glycosylated (N-linked (GlcNAc...) asparagine). A helical transmembrane segment spans residues 512 to 532; that stretch reads KYGIYAPLFAPILIPLLISFI. The Cytoplasmic segment spans residues 533–554; that stretch reads KEVKDMLRERKLHRVANVPKPN.

Belongs to the PIGS family. As to quaternary structure, forms a complex with PIG-T homolog, PIG-U homolog and GPI8.

The protein localises to the endoplasmic reticulum membrane. It functions in the pathway glycolipid biosynthesis; glycosylphosphatidylinositol-anchor biosynthesis. Component of the GPI transamidase complex. Involved in transfer of GPI to proteins. This chain is GPI transamidase component PIG-S homolog (gpi17), found in Schizosaccharomyces pombe (strain 972 / ATCC 24843) (Fission yeast).